A 276-amino-acid chain; its full sequence is Octopine-binding periplasmic protein (276 aa).

An N-terminal signal peptide occupies residues 1-20 (MKLKTILCAALLLVAGQAAA). A disulfide bridge links cysteine 57 with cysteine 64.

The protein belongs to the bacterial solute-binding protein 3 family.

Its subcellular location is the periplasm. Component of the octopine active transport system probably consisting of four subunits: Q, M, P and T. In Agrobacterium tumefaciens (strain Ach5), this protein is Octopine-binding periplasmic protein (occT).